The primary structure comprises 488 residues: Putative sugar transporter ERD6-like 13 (488 aa).

12 helical membrane-spanning segments follow: residues 51–71, 89–109, 116–138, 151–171, 182–202, 207–227, 291–311, 324–344, 353–373, 390–410, 423–445, and 451–471; these read LILL…GTAA, LAEF…GAAM, VFGR…LMIA, LFLG…IVEI, AINS…GSVI, LALI…FIPE, VGIG…TFYL, VGVM…IVIV, LTVA…SFLF, GVLV…WVMI, GTLC…NFLF, and GVFF…MKMV.

This sequence belongs to the major facilitator superfamily. Sugar transporter (TC 2.A.1.1) family.

The protein resides in the membrane. Functionally, sugar transporter. The polypeptide is Putative sugar transporter ERD6-like 13 (Arabidopsis thaliana (Mouse-ear cress)).